A 456-amino-acid polypeptide reads, in one-letter code: DnaJ homolog dnj-10 (456 aa).

One can recognise a J domain in the interval 44 to 108; sequence DYYKTLGVDK…TKRQEYDAYG (65 aa). The CR-type zinc-finger motif lies at 178 to 257; that stretch reads GATKNVSVNV…CEGEGQTVQR (80 aa). CXXCXGXG motif repeat units lie at residues 208–215, 231–238, and 245–252; these read CPYCNGTG, CNRCRGSG, and CQECEGEG. The segment covering 395 to 429 has biased composition (basic and acidic residues); it reads KGLEKNQKTEEKETKKNEEKKSEGASESQKRRSEP. Positions 395–443 are disordered; sequence KGLEKNQKTEEKETKKNEEKKSEGASESQKRRSEPVAENAETIDENQEN.

This chain is DnaJ homolog dnj-10 (dnj-10), found in Caenorhabditis elegans.